A 700-amino-acid chain; its full sequence is UvrABC system protein B (700 aa).

The 158-residue stretch at 26-183 (SGLHRGDRIQ…RALVGIQYLR (158 aa)) folds into the Helicase ATP-binding domain. Residue 39–46 (GVTGSGKT) participates in ATP binding. A Beta-hairpin motif is present at residues 92 to 115 (YYDYYQPEAYVPSSDTYIEKDASI). The Helicase C-terminal domain maps to 430–596 (QVDDLLHEIR…GVTKSVDEVR (167 aa)). Positions 608 to 627 (REGEAPAPRRLASESAPRSR) are disordered. The region spanning 631–666 (ETLVGELEIAMREAAVALDFEAAARLRDQLFEVRTA) is the UVR domain. The segment at 667 to 700 (LGQAPSEARGNAQAPKRPPGSAPQRRAGGGRRGR) is disordered.

Belongs to the UvrB family. Forms a heterotetramer with UvrA during the search for lesions. Interacts with UvrC in an incision complex.

Its subcellular location is the cytoplasm. In terms of biological role, the UvrABC repair system catalyzes the recognition and processing of DNA lesions. A damage recognition complex composed of 2 UvrA and 2 UvrB subunits scans DNA for abnormalities. Upon binding of the UvrA(2)B(2) complex to a putative damaged site, the DNA wraps around one UvrB monomer. DNA wrap is dependent on ATP binding by UvrB and probably causes local melting of the DNA helix, facilitating insertion of UvrB beta-hairpin between the DNA strands. Then UvrB probes one DNA strand for the presence of a lesion. If a lesion is found the UvrA subunits dissociate and the UvrB-DNA preincision complex is formed. This complex is subsequently bound by UvrC and the second UvrB is released. If no lesion is found, the DNA wraps around the other UvrB subunit that will check the other stand for damage. In Gemmatimonas aurantiaca (strain DSM 14586 / JCM 11422 / NBRC 100505 / T-27), this protein is UvrABC system protein B.